We begin with the raw amino-acid sequence, 620 residues long: Toxin coregulated pilus biosynthesis protein I (620 aa).

The region spanning 344–580 (TMNDLSIKQT…DVAKQMEDIR (237 aa)) is the Methyl-accepting transducer domain.

Belongs to the methyl-accepting chemotaxis (MCP) protein family.

Its subcellular location is the cell inner membrane. In terms of biological role, may function as an environmental regulator of TCP biogenesis. Negatively regulates the synthesis of the major pilin subunit of TCP (TcpA). This chain is Toxin coregulated pilus biosynthesis protein I (tcpI), found in Vibrio cholerae serotype O1 (strain ATCC 39315 / El Tor Inaba N16961).